Reading from the N-terminus, the 241-residue chain is Probable transcriptional regulator PhnF (241 aa).

Residues 11-78 (PTRYQEIAAK…QGVGVLVLMR (68 aa)) form the HTH gntR-type domain. Residues 38–57 (EQQLAARFEVNRHTLRRAID) constitute a DNA-binding region (H-T-H motif).

In terms of biological role, belongs to an operon involved in alkylphosphonate uptake and C-P lyase. Exact function not known. By similarity could be a transcriptional regulator. This chain is Probable transcriptional regulator PhnF (phnF), found in Escherichia coli (strain K12).